We begin with the raw amino-acid sequence, 125 residues long: UPF0593 mitochondrial protein C806.05 (125 aa).

This sequence belongs to the UPF0593 family.

It localises to the mitochondrion. The sequence is that of UPF0593 mitochondrial protein C806.05 from Schizosaccharomyces pombe (strain 972 / ATCC 24843) (Fission yeast).